Here is a 117-residue protein sequence, read N- to C-terminus: uncharacterized protein (117 aa).

2 helical membrane-spanning segments follow: residues 43–63 and 73–93; these read APIM…LMLL and AVQH…VFIV.

It is found in the cell membrane. This is an uncharacterized protein from Bacillus subtilis (strain 168).